A 436-amino-acid polypeptide reads, in one-letter code: Bystin (436 aa).

The disordered stretch occupies residues 1–105; sequence MPKLKVTRGA…GSDEEDEEWP (105 aa). Phosphoserine is present on S54. A compositionally biased stretch (basic and acidic residues) spans 70-86; it reads TEHATGDRPAKPRERAT. The segment covering 96–105 has biased composition (acidic residues); it reads GSDEEDEEWP. Position 97 is a phosphoserine (S97). Residue T155 is modified to Phosphothreonine. A phosphoserine mark is found at S166 and S413.

This sequence belongs to the bystin family. Binds trophinin, tastin and cytokeratins.

It localises to the cytoplasm. Its subcellular location is the nucleus. The protein localises to the nucleolus. In terms of biological role, required for processing of 20S pre-rRNA precursor and biogenesis of 40S ribosomal subunits. The protein is Bystin of Rattus norvegicus (Rat).